The chain runs to 464 residues: Fumarate hydratase class II (464 aa).

Substrate-binding positions include 98–100, 129–132, 139–141, and T187; these read SGT, HPND, and SSN. H188 functions as the Proton donor/acceptor in the catalytic mechanism. The active site involves S318. Residues S319 and 324-326 contribute to the substrate site; that span reads KVN.

The protein belongs to the class-II fumarase/aspartase family. Fumarase subfamily. In terms of assembly, homotetramer.

Its subcellular location is the cytoplasm. The enzyme catalyses (S)-malate = fumarate + H2O. The protein operates within carbohydrate metabolism; tricarboxylic acid cycle; (S)-malate from fumarate: step 1/1. In terms of biological role, involved in the TCA cycle. Catalyzes the stereospecific interconversion of fumarate to L-malate. In Wigglesworthia glossinidia brevipalpis, this protein is Fumarate hydratase class II.